The sequence spans 447 residues: GTPase Der (447 aa).

EngA-type G domains are found at residues 3 to 167 and 180 to 353; these read PVIA…QLPE and IRLA…KAAT. GTP-binding positions include 9–16, 56–60, 119–122, 186–193, 233–237, and 298–301; these read GRPNVGKS, DTGGF, NKAE, DTAGL, and NKWD. The region spanning 353–438 is the KH-like domain; that stretch reads TCKMPTPVLT…PLRIEMKTSR (86 aa).

This sequence belongs to the TRAFAC class TrmE-Era-EngA-EngB-Septin-like GTPase superfamily. EngA (Der) GTPase family. As to quaternary structure, associates with the 50S ribosomal subunit.

Its function is as follows. GTPase that plays an essential role in the late steps of ribosome biogenesis. The protein is GTPase Der of Paracidovorax citrulli (strain AAC00-1) (Acidovorax citrulli).